A 607-amino-acid chain; its full sequence is Matrix metalloproteinase-16 (607 aa).

The signal sequence occupies residues Met1 to Cys31. Residues Ala32–Arg119 constitute a propeptide that is removed on maturation. A glycan (N-linked (GlcNAc...) asparagine) is linked at Asn83. A Cysteine switch motif is present at residues Pro99–Gln106. A Zn(2+)-binding site is contributed by Cys101. The Extracellular segment spans residues Tyr120 to Ala564. A Ca(2+)-binding site is contributed by Asp183. His193 and Asp195 together coordinate Zn(2+). Ca(2+) is bound by residues Asp200, Gly201, Gly203, and Phe205. Residue His208 coordinates Zn(2+). Ca(2+) contacts are provided by Gly215, Gly217, and Asp219. Residue His221 coordinates Zn(2+). 2 residues coordinate Ca(2+): Asp223 and Glu226. His246 contributes to the Zn(2+) binding site. Glu247 is a catalytic residue. The Zn(2+) site is built by His250 and His256. Residues Asp281–Pro340 form a disordered region. Residues Asp294–Ala315 are compositionally biased toward pro residues. Hemopexin repeat units lie at residues Pro340–Leu388, Pro389–Ile434, Pro436–Pro484, and Glu485–Cys532. Cysteines 343 and 532 form a disulfide. The chain crosses the membrane as a helical span at residues Ile565–Phe585. Over Gln586–Val607 the chain is Cytoplasmic.

Belongs to the peptidase M10A family. As to quaternary structure, interacts with CSPG4 through CSPG4 chondroitin sulfate glycosaminoglycan. Zn(2+) serves as cofactor. It depends on Ca(2+) as a cofactor. The precursor is cleaved by a furin endopeptidase.

The protein resides in the cell membrane. Functionally, endopeptidase that degrades various components of the extracellular matrix, such as collagen type III and fibronectin. Activates progelatinase A. Involved in the matrix remodeling of blood vessels. It has no effect on type I, II, IV and V collagen. However, upon interaction with CSPG4, it may be involved in degradation and invasion of type I collagen by melanoma cells. The chain is Matrix metalloproteinase-16 (Mmp16) from Mus musculus (Mouse).